Here is a 64-residue protein sequence, read N- to C-terminus: MPKAKTHSGASKRFRRTGTGKIVRQKANRRHLLEHKPSTRTRRLDGRTVVAANDTKRVTSLLNG.

Positions 1 to 22 (MPKAKTHSGASKRFRRTGTGKI) are disordered.

Belongs to the bacterial ribosomal protein bL35 family.

This Mycobacterium tuberculosis (strain ATCC 25177 / H37Ra) protein is Large ribosomal subunit protein bL35.